The primary structure comprises 217 residues: Small ribosomal subunit protein uS3 (217 aa).

The 71-residue stretch at 40 to 110 folds into the KH type-2 domain; sequence IRDVINKGFN…EVYINIHEVR (71 aa).

Belongs to the universal ribosomal protein uS3 family. As to quaternary structure, part of the 30S ribosomal subunit. Forms a tight complex with proteins S10 and S14.

Functionally, binds the lower part of the 30S subunit head. Binds mRNA in the 70S ribosome, positioning it for translation. In Rickettsia massiliae (strain Mtu5), this protein is Small ribosomal subunit protein uS3.